Here is a 335-residue protein sequence, read N- to C-terminus: SLAM family member 7 (335 aa).

The signal sequence occupies residues Met-1 to Ala-22. Residues Ser-23–Val-124 form the Ig-like V-type domain. The Extracellular segment spans residues Ser-23–Met-226. Asn-98, Asn-142, Asn-148, Asn-172, Asn-176, and Asn-204 each carry an N-linked (GlcNAc...) asparagine glycan. An Ig-like C2-type domain is found at Pro-131–Ser-206. 2 cysteine pairs are disulfide-bonded: Cys-145/Cys-215 and Cys-151/Cys-195. The helical transmembrane segment at Val-227–Leu-247 threads the bilayer. The Cytoplasmic portion of the chain corresponds to Trp-248–Ile-335. The segment at Ser-278–Lys-296 is interaction with FYN when phosphorylated at Tyr-284. The ITSM motif lies at Thr-302–Val-307.

In terms of assembly, isoform 1 binds to SH2D1A when its cytoplasmic tail is phosphorylated in the presence of FYN (in vitro); low affinity binding, the physiological relevance of the interaction is questioned. Interacts with SH2D1B; in NK cells. Interacts (via ITSM phosphorylated on Tyr-302) with SH2D1B, PTPN6/SHP-1, PTPN11/SHP-2, INPP5D/SHIP1, CSK and FYN. Expressed in spleen, lymph node, peripheral blood leukocytes, bone marrow, small intestine, stomach, appendix, lung and trachea. Expression was detected in NK cells, activated B-cells, NK-cell line but not in promyelocytic, B-, or T-cell lines. Expressed in monocytes. Isoform 3 is expressed at much lower level than isoform 1.

It is found in the membrane. Functionally, self-ligand receptor of the signaling lymphocytic activation molecule (SLAM) family. SLAM receptors triggered by homo- or heterotypic cell-cell interactions are modulating the activation and differentiation of a wide variety of immune cells and thus are involved in the regulation and interconnection of both innate and adaptive immune response. Activities are controlled by presence or absence of small cytoplasmic adapter proteins, SH2D1A/SAP and/or SH2D1B/EAT-2. Isoform 1 mediates NK cell activation through a SH2D1A-independent extracellular signal-regulated ERK-mediated pathway. Positively regulates NK cell functions by a mechanism dependent on phosphorylated SH2D1B. Downstream signaling implicates PLCG1, PLCG2 and PI3K. In addition to heterotypic NK cells-target cells interactions also homotypic interactions between NK cells may contribute to activation. However, in the absence of SH2D1B, inhibits NK cell function. Also acts inhibitory in T-cells. May play a role in lymphocyte adhesion. In LPS-activated monocytes negatively regulates production of pro-inflammatory cytokines. Isoform 3 does not mediate any NK cell activation. The chain is SLAM family member 7 (SLAMF7) from Homo sapiens (Human).